A 468-amino-acid polypeptide reads, in one-letter code: Lactate utilization protein B (468 aa).

4Fe-4S ferredoxin-type domains lie at Gly303–Tyr333 and Tyr352–Leu381. Residues Cys312, Cys315, Cys318, Cys322, Cys365, Cys368, and Cys372 each contribute to the [4Fe-4S] cluster site. Positions Pro442–Ala468 are disordered. The segment covering Thr457 to Ala468 has biased composition (basic and acidic residues).

This sequence belongs to the LutB/YkgF family.

Functionally, is involved in L-lactate degradation and allows cells to grow with lactate as the sole carbon source. Has probably a role as an electron transporter during oxidation of L-lactate. This is Lactate utilization protein B from Exiguobacterium sp. (strain ATCC BAA-1283 / AT1b).